Here is a 421-residue protein sequence, read N- to C-terminus: Gamma-glutamyl phosphate reductase (421 aa).

It belongs to the gamma-glutamyl phosphate reductase family.

It is found in the cytoplasm. The enzyme catalyses L-glutamate 5-semialdehyde + phosphate + NADP(+) = L-glutamyl 5-phosphate + NADPH + H(+). It participates in amino-acid biosynthesis; L-proline biosynthesis; L-glutamate 5-semialdehyde from L-glutamate: step 2/2. In terms of biological role, catalyzes the NADPH-dependent reduction of L-glutamate 5-phosphate into L-glutamate 5-semialdehyde and phosphate. The product spontaneously undergoes cyclization to form 1-pyrroline-5-carboxylate. The protein is Gamma-glutamyl phosphate reductase of Nocardia farcinica (strain IFM 10152).